The sequence spans 56 residues: Small ribosomal subunit protein uS14 (56 aa).

It belongs to the universal ribosomal protein uS14 family.

This chain is Small ribosomal subunit protein uS14 (RPS29), found in Kluyveromyces lactis (strain ATCC 8585 / CBS 2359 / DSM 70799 / NBRC 1267 / NRRL Y-1140 / WM37) (Yeast).